The sequence spans 115 residues: Protein SPIRAL1-like 2 (115 aa).

Residues 29–48 (AKAKPAAAAEKETTPAPVKK) form a disordered region.

It belongs to the SPIRAL1 family.

Its function is as follows. Acts in maintaining the cortical microtubules organization essential for anisotropic cell growth. The protein is Protein SPIRAL1-like 2 of Oryza sativa subsp. japonica (Rice).